The primary structure comprises 737 residues: Delta and Notch-like epidermal growth factor-related receptor (737 aa).

Positions 1–34 (MQPRRAQAPGAQLLPALALLLLLLGAGPRGSSLA) are cleaved as a signal peptide. Over 35-640 (NPVPAAPLSA…LTNMPRHSLY (606 aa)) the chain is Extracellular. 2 consecutive EGF-like domains span residues 44 to 92 (APGP…ANCQ) and 94 to 133 (VADP…PNCE). Positions 44–133 (APGPCAAQPC…NEGYEGPNCE (90 aa)) are interaction with NOTCH1. 6 disulfide bridges follow: Cys-48-Cys-59, Cys-53-Cys-80, Cys-82-Cys-91, Cys-98-Cys-108, Cys-103-Cys-121, and Cys-123-Cys-132. Asn-223 is a glycosylation site (N-linked (GlcNAc...) asparagine). EGF-like domains follow at residues 309-348 (PGES…TFCE), 349-390 (EYDA…ELCQ), 392-428 (KIDY…SACE), 430-466 (KVDP…PTCA), and 468-503 (LIDF…LYCE). Cystine bridges form between Cys-319/Cys-336, Cys-338/Cys-347, Cys-353/Cys-364, Cys-358/Cys-378, Cys-380/Cys-389, Cys-396/Cys-407, Cys-401/Cys-416, Cys-418/Cys-427, Cys-434/Cys-445, Cys-439/Cys-454, Cys-456/Cys-465, Cys-472/Cys-482, Cys-477/Cys-491, Cys-493/Cys-502, Cys-509/Cys-520, Cys-514/Cys-529, Cys-531/Cys-540, Cys-547/Cys-558, Cys-552/Cys-567, Cys-569/Cys-578, Cys-585/Cys-596, Cys-590/Cys-605, and Cys-607/Cys-616. An EGF-like 8; calcium-binding domain is found at 505-541 (EYNECLSAPCLNAATCRDLVNGYECVCLAEYKGTHCE). In terms of domain architecture, EGF-like 9 spans 543–579 (YKDPCANVSCLNGATCDSDGLNGTCICAPGFTGEECD). Residues 546 to 568 (PCANVSCLNGATCDSDGLNGTCI) enclose the Follistatin-like domain. N-linked (GlcNAc...) asparagine glycosylation occurs at Asn-564. The EGF-like 10; calcium-binding domain occupies 581 to 617 (DINECDSNPCHHGGSCLDQPNGYNCHCPHGWVGANCE). A helical transmembrane segment spans residues 641 to 661 (IIIGALCVAFILMLIILIVGI). Residues 662 to 737 (CRISRIEYQG…LVTLIKTKDL (76 aa)) are Cytoplasmic-facing. Residues 677–680 (YEEF) form an interaction with AP1G1 and somatodendritic targeting region. Ser-685 bears the Phosphoserine mark. A phosphotyrosine mark is found at Tyr-711 and Tyr-721. Phosphoserine is present on Ser-722.

In terms of assembly, interacts with AP1G1. Interacts with NOTCH1. Expressed in brain, spinal cord and adrenal gland.

It localises to the cell membrane. Functionally, activator of the NOTCH1 pathway. May mediate neuron-glia interaction during astrocytogenesis. The chain is Delta and Notch-like epidermal growth factor-related receptor (DNER) from Homo sapiens (Human).